Here is a 282-residue protein sequence, read N- to C-terminus: sn-glycerol-3-phosphate transport system permease protein UgpE (282 aa).

A run of 6 helical transmembrane segments spans residues 14-34 (LILILGIIIVAFPIYYTFVAS), 86-106 (MAIAVGKIIISFMSAFAIVFF), 112-132 (MFFFWMIFITLMLPVEVRILP), 146-168 (YAGLTLPLMASATATFLFRQFFL), 201-221 (IAALFVILSIYGWTQYLWPLL), and 248-268 (WNYVMVTAILAIIPPILVVVL). The 192-residue stretch at 78-269 (LWNSFVVAMA…IPPILVVVLM (192 aa)) folds into the ABC transmembrane type-1 domain.

It belongs to the binding-protein-dependent transport system permease family. In terms of assembly, the complex is composed of two ATP-binding proteins (UgpC), two transmembrane proteins (UgpA and UgpE) and a solute-binding protein (UgpB).

The protein localises to the cell inner membrane. Part of the ABC transporter complex UgpBAEC involved in sn-glycerol-3-phosphate (G3P) import. Probably responsible for the translocation of the substrate across the membrane. In Brucella suis biovar 1 (strain 1330), this protein is sn-glycerol-3-phosphate transport system permease protein UgpE (ugpE).